The sequence spans 371 residues: Aminomethyltransferase (371 aa).

The protein belongs to the GcvT family. The glycine cleavage system is composed of four proteins: P, T, L and H.

It carries out the reaction N(6)-[(R)-S(8)-aminomethyldihydrolipoyl]-L-lysyl-[protein] + (6S)-5,6,7,8-tetrahydrofolate = N(6)-[(R)-dihydrolipoyl]-L-lysyl-[protein] + (6R)-5,10-methylene-5,6,7,8-tetrahydrofolate + NH4(+). Functionally, the glycine cleavage system catalyzes the degradation of glycine. The chain is Aminomethyltransferase from Leptospira interrogans serogroup Icterohaemorrhagiae serovar Lai (strain 56601).